Reading from the N-terminus, the 1153-residue chain is MPELAVMDLGRQLCVKMKKQRKAEMTIPTAMKGLEIHFYLADTHQLEFFKACYTAEDLCVEAAKRCRISPLCHNLFALYEESQDLWYAPNHVFKVTDETSIKLHYRMRFYFTNWHGTSEIESPVWRHTLSKQKSVLNSQKTTEGTPLLDAASLDYLFAQGQYDFLRGLSPVRPTQTDEEHHEIENECLGMAVLAITHHAKSNNLPLSGAGAETSYKRFIPDSLNRTIKQRNFLTRIRISNVFKNFLNEFNSKTIQDSNIGLYDLKVKYLSTLETLTQGVGREIFKPKNLKVTGESEGSPAQMLPLGDNGMGYEVQVYGTTGISWRRKPAPNQLILKDKPKSKKIKGDKQWNDKKKDSGWTLFSDFHEITHIVIKDCCVTIYRQDNKTMELDLFYRDAALSFAALVDGYFRLTVDAHHYLCTDVAPSSVVQNLENGCHGPICTEYAIHKLRQEGNEEGTYVLRWSCTEYNFIIMTVVCIELDLCESRPVPQYKNFQIETSPQGYRLYGTDTFRPTLKELLEHLQGQLLRTDNLRFQLRRCCPPQPREISNLLVMTTDREPVPQKKTQVSQLSFDRILKEEIVQGEHLGRGTRTNIYAGILKPKSDDEDDLGGYSQEVKVVLKVLGSGHRDISLAFFETASMMRQISHKHTALLYGVCVRHQENIMVEEFVQYGPLDLFMRRQTTPLSTAWKFQVAKQLASALSYLEDKKMVHGYVCSKNILVARDGLDGEGGPFIKLSDPGIPITVLSREECVDRIPWIAPECVKDTANLTIAADKWSFGTTLWEICYNGEIPLKDKKLSEKERFYAAQCQLATPDCDELAKLMTHCMTYDPRQRLFFRAIVRDIVMVEKQNPSIQPVPMLEVDPTVFEKRFLKKIRDLGEGHFGKVELCRYDPRGDRTGELVAVKSLKPENREEQSNNLWREIHILRELYHENIVKYKGICNEEGGRSIKLIMEFLPAGSLKEYLPRNKAHINLKTLHNYSVQICQGMDYLGSRNYIHRDLAARNVLVENEGTVKIGDFGLTKSIKDNEGYYTVKDDLDSPVFWYAPECLIHCKFYRASDVWSFGVTMYELLTYCDASCSPMSVFLKLIGPTHGQMTVTRLVKVLEEGKRLPRPDDCSEQLYNLMRRCWEATPEKRIDFKSLIANFQQMLDNL.

Positions 32–416 (KGLEIHFYLA…GYFRLTVDAH (385 aa)) constitute an FERM domain. Residues 435–540 (GCHGPICTEY…NLRFQLRRCC (106 aa)) enclose the SH2; atypical domain. 2 Protein kinase domains span residues 580 to 846 (IVQG…DIVM) and 872 to 1150 (LKKI…QQML). Residues 878 to 886 (LGEGHFGKV) and lysine 905 contribute to the ATP site. The active-site Proton acceptor is aspartate 1000. Phosphotyrosine; by autocatalysis occurs at positions 1031 and 1032.

The protein belongs to the protein kinase superfamily. Tyr protein kinase family. JAK subfamily. The cofactor is Mg(2+).

The protein localises to the endomembrane system. It catalyses the reaction L-tyrosyl-[protein] + ATP = O-phospho-L-tyrosyl-[protein] + ADP + H(+). Functionally, tyrosine kinase of the non-receptor type, involved in the IFN-alpha/beta/gamma signal pathway. Appears to be required in early development for specific cell migrations (epiboly), expression of homeobox protein goosecoid and formation of anterior structures. In Danio rerio (Zebrafish), this protein is Tyrosine-protein kinase JAK1 (jak1).